A 641-amino-acid chain; its full sequence is Fibrinogen alpha-2 chain (641 aa).

A signal peptide spans 1 to 23 (MTLRGVSMVLTWCLLVSKAWSSG). The stretch at 107-226 (SVSDVSNQVV…IVHESFSVER (120 aa)) forms a coiled coil. The segment at 228-327 (DARSLHPYSG…QKTEELSFKK (100 aa)) is disordered. The N-linked (GlcNAc...) asparagine glycan is linked to N271. Residues 279-289 (VDERSKVEKDV) are compositionally biased toward basic and acidic residues. Residues 293 to 317 (STSSVSSSSSSSSSSSSTSSTISST) show a composition bias toward low complexity. The Fibrinogen C-terminal domain occupies 395–636 (RTNLSEYIDC…RTAVRFRRVQ (242 aa)). A glycan (N-linked (GlcNAc...) asparagine) is linked at N397. A disulfide bridge links C404 with C435. N458 is a glycosylation site (N-linked (GlcNAc...) asparagine). An intrachain disulfide couples C571 to C584.

As to quaternary structure, heterohexamer; disulfide linked. Contains 2 sets of 3 non-identical chains (alpha, beta and gamma). The 2 heterotrimers are in head to head conformation with the N-termini in a small central domain. Post-translationally, conversion of fibrinogen to fibrin is triggered by thrombin, which cleaves fibrinopeptides A and B from alpha and beta chains, and thus exposes the N-terminal polymerization sites responsible for the formation of the soft clot. The soft clot is converted into the hard clot by factor XIIIA which catalyzes the epsilon-(gamma-glutamyl)lysine cross-linking between gamma chains (stronger) and between alpha chains (weaker) of different monomers. Forms F13A-mediated cross-links between a glutamine and the epsilon-amino group of a lysine residue, forming fibronectin-fibrinogen heteropolymers.

Its subcellular location is the secreted. Fibrinogen has a double function: yielding monomers that polymerize into fibrin and acting as a cofactor in platelet aggregation. The chain is Fibrinogen alpha-2 chain from Petromyzon marinus (Sea lamprey).